A 428-amino-acid polypeptide reads, in one-letter code: Leucine-rich repeat-containing protein 42 (428 aa).

LRR repeat units lie at residues 149-170 (VLCS…EEIK), 174-195 (ELTC…LEHL), 202-222 (SVTQ…RKMT), 234-255 (NLTL…GYLF), and 259-280 (KLNC…KHKL). A disordered region spans residues 379–412 (KHEAISSQESKKSKKRPFEESETEQNNSSQPSKQ). A phosphoserine mark is found at Ser406 and Ser407.

The protein belongs to the LRRC42 family.

The polypeptide is Leucine-rich repeat-containing protein 42 (LRRC42) (Homo sapiens (Human)).